Reading from the N-terminus, the 299-residue chain is S-formylglutathione hydrolase (299 aa).

Residues Met-1 and His-140 each coordinate Cu cation. Residues Ser-161, Asp-241, and His-276 each act as charge relay system in the active site.

This sequence belongs to the esterase D family. Monomer.

It is found in the cytoplasm. It catalyses the reaction S-formylglutathione + H2O = formate + glutathione + H(+). In terms of biological role, serine hydrolase involved in the detoxification of formaldehyde. In Saccharomyces cerevisiae (strain ATCC 204508 / S288c) (Baker's yeast), this protein is S-formylglutathione hydrolase.